Here is a 156-residue protein sequence, read N- to C-terminus: UPF0336 protein SACE_6876 (156 aa).

One can recognise a MaoC-like domain in the interval 8 to 128 (IGREYPPTPA…DFLTVRAEIT (121 aa)).

The protein belongs to the UPF0336 family.

The polypeptide is UPF0336 protein SACE_6876 (Saccharopolyspora erythraea (strain ATCC 11635 / DSM 40517 / JCM 4748 / NBRC 13426 / NCIMB 8594 / NRRL 2338)).